A 207-amino-acid chain; its full sequence is Hepatic lectin (207 aa).

An N-acetylmethionine modification is found at M1. Topologically, residues 1–23 (MDEERLSDNVRLYKGGSIRQGLR) are cytoplasmic. The chain crosses the membrane as a helical; Signal-anchor for type II membrane protein span at residues 24 to 48 (SFAAVYVLLALSFLLLTLLSSVSLA). The Extracellular portion of the chain corresponds to 49–207 (RIAALSSKLS…YYVCEKPLPK (159 aa)). Residue N67 is glycosylated (N-linked (GlcNAc...) asparagine). Residues 77–203 (PCGAQSRQWE…TYECYYVCEK (127 aa)) enclose the C-type lectin domain. Cystine bridges form between C78/C92, C109/C201, and C179/C193.

Some or all of the cysteines are involved in disulfide bonds.

Its subcellular location is the membrane. Hepatic lectin is a membrane receptor protein that recognizes and binds exposed N-acetylglucosamine moieties of plasma glycoproteins, thus mediating their clearance (from the circulation) and endocytosis. In Gallus gallus (Chicken), this protein is Hepatic lectin.